Reading from the N-terminus, the 248-residue chain is Phosphatidylserine decarboxylase proenzyme (248 aa).

The active-site Schiff-base intermediate with substrate; via pyruvic acid is the S206. The residue at position 206 (S206) is a Pyruvic acid (Ser); by autocatalysis.

This sequence belongs to the phosphatidylserine decarboxylase family. PSD-A subfamily. Heterodimer of a large membrane-associated beta subunit and a small pyruvoyl-containing alpha subunit. Pyruvate serves as cofactor. Is synthesized initially as an inactive proenzyme. Formation of the active enzyme involves a self-maturation process in which the active site pyruvoyl group is generated from an internal serine residue via an autocatalytic post-translational modification. Two non-identical subunits are generated from the proenzyme in this reaction, and the pyruvate is formed at the N-terminus of the alpha chain, which is derived from the carboxyl end of the proenzyme. The post-translation cleavage follows an unusual pathway, termed non-hydrolytic serinolysis, in which the side chain hydroxyl group of the serine supplies its oxygen atom to form the C-terminus of the beta chain, while the remainder of the serine residue undergoes an oxidative deamination to produce ammonia and the pyruvoyl prosthetic group on the alpha chain.

It is found in the cell membrane. It carries out the reaction a 1,2-diacyl-sn-glycero-3-phospho-L-serine + H(+) = a 1,2-diacyl-sn-glycero-3-phosphoethanolamine + CO2. It participates in phospholipid metabolism; phosphatidylethanolamine biosynthesis; phosphatidylethanolamine from CDP-diacylglycerol: step 2/2. In terms of biological role, catalyzes the formation of phosphatidylethanolamine (PtdEtn) from phosphatidylserine (PtdSer). This chain is Phosphatidylserine decarboxylase proenzyme, found in Nitrobacter hamburgensis (strain DSM 10229 / NCIMB 13809 / X14).